The chain runs to 542 residues: Calcium/calmodulin-dependent protein kinase type II subunit beta (542 aa).

Residues tyrosine 14–valine 272 form the Protein kinase domain. The residue at position 17 (tyrosine 17) is a Phosphotyrosine. ATP is bound by residues isoleucine 20–valine 28 and lysine 43. Aspartate 136 functions as the Proton acceptor in the catalytic mechanism. Residues histidine 283 to lysine 292 are autoinhibitory domain. Threonine 287 carries the phosphothreonine; by autocatalysis modification. Residues leucine 291–lysine 301 form a calmodulin-binding region. A phosphothreonine; by autocatalysis mark is found at threonine 306 and threonine 307. The disordered stretch occupies residues alanine 349–alanine 376. A compositionally biased stretch (polar residues) spans proline 354–lysine 369. Phosphoserine occurs at positions 367, 371, 394, and 397. 2 positions are modified to phosphothreonine: threonine 400 and threonine 401.

It belongs to the protein kinase superfamily. CAMK Ser/Thr protein kinase family. CaMK subfamily. CAMK2 is composed of 4 different chains: alpha (CAMK2A), beta (CAMK2B), gamma (CAMK2G), and delta (CAMK2D). The different isoforms assemble into homo- or heteromultimeric holoenzymes composed of 12 subunits with two hexameric rings stacked one on top of the other. Interacts with SYNGAP1, CAMK2N2 and MPDZ. Interacts with FOXO3. Interacts (when in a kinase inactive state not associated with calmodulin) with ARC; leading to target ARC to inactive synapses. Interacts with CAMK2N1; this interaction requires CAMK2B activation by Ca(2+). Autophosphorylation of Thr-287 following activation by Ca(2+)/calmodulin. Phosphorylation of Thr-287 locks the kinase into an activated state.

It is found in the cytoplasm. Its subcellular location is the cytoskeleton. It localises to the microtubule organizing center. The protein resides in the centrosome. The protein localises to the sarcoplasmic reticulum membrane. It is found in the synapse. It catalyses the reaction L-seryl-[protein] + ATP = O-phospho-L-seryl-[protein] + ADP + H(+). The catalysed reaction is L-threonyl-[protein] + ATP = O-phospho-L-threonyl-[protein] + ADP + H(+). Activated by Ca(2+)/calmodulin. Binding of calmodulin results in conformational change that relieves intrasteric autoinhibition and allows autophosphorylation of Thr-287 which turns the kinase in a constitutively active form and confers to the kinase a Ca(2+)-independent activity. Its function is as follows. Calcium/calmodulin-dependent protein kinase that functions autonomously after Ca(2+)/calmodulin-binding and autophosphorylation, and is involved in dendritic spine and synapse formation, neuronal plasticity and regulation of sarcoplasmic reticulum Ca(2+) transport in skeletal muscle. In neurons, plays an essential structural role in the reorganization of the actin cytoskeleton during plasticity by binding and bundling actin filaments in a kinase-independent manner. This structural function is required for correct targeting of CaMK2A, which acts downstream of NMDAR to promote dendritic spine and synapse formation and maintain synaptic plasticity which enables long-term potentiation (LTP) and hippocampus-dependent learning. In developing hippocampal neurons, promotes arborization of the dendritic tree and in mature neurons, promotes dendritic remodeling. Also regulates the migration of developing neurons. Participates in the modulation of skeletal muscle function in response to exercise. In slow-twitch muscles, is involved in regulation of sarcoplasmic reticulum (SR) Ca(2+) transport and in fast-twitch muscle participates in the control of Ca(2+) release from the SR through phosphorylation of triadin, a ryanodine receptor-coupling factor, and phospholamban (PLN/PLB), an endogenous inhibitor of SERCA2A/ATP2A2. In response to interferon-gamma (IFN-gamma) stimulation, catalyzes phosphorylation of STAT1, stimulating the JAK-STAT signaling pathway. Phosphorylates reticulophagy regulator RETREG1 at 'Thr-134' under endoplasmic reticulum stress conditions which enhances RETREG1 oligomerization and its membrane scission and reticulophagy activity. The chain is Calcium/calmodulin-dependent protein kinase type II subunit beta (Camk2b) from Mus musculus (Mouse).